The chain runs to 497 residues: NAD(P)H-quinone oxidoreductase subunit 2, chloroplastic (497 aa).

The next 14 helical transmembrane spans lie at 13–33, 37–57, 76–96, 103–123, 129–149, 164–184, 206–226, 240–260, 274–294, 311–331, 332–352, 373–393, 406–426, and 462–482; these read VILPEIIVIVCLLIVLVLDLI, SAWLSTISLTGLVAATIALVF, FTISFRGIITISSALSILIST, GMGLAECLIFILTATVGGLFL, LVTVFVSLECLSLSSYLLVGY, LLMGGASSSIIAYGFSWLYGL, IAVWVALACVVVGIGFKLSAF, PTPVVAFFSVGSKAAALALAT, WHVLLELLALLSMIFGNLIAA, AGYLIIGIVCGNIYGYTGMIT, YMVTYIFMNLGAFGCVILFGL, AFCLSVCLLSLAGIPPLAGFF, GLYLLVYVALITSVISMYYYL, and VGIALCVFISTTLGFVINPII.

Belongs to the complex I subunit 2 family. NDH is composed of at least 16 different subunits, 5 of which are encoded in the nucleus.

The protein localises to the plastid. It localises to the chloroplast thylakoid membrane. The catalysed reaction is a plastoquinone + NADH + (n+1) H(+)(in) = a plastoquinol + NAD(+) + n H(+)(out). The enzyme catalyses a plastoquinone + NADPH + (n+1) H(+)(in) = a plastoquinol + NADP(+) + n H(+)(out). Its function is as follows. NDH shuttles electrons from NAD(P)H:plastoquinone, via FMN and iron-sulfur (Fe-S) centers, to quinones in the photosynthetic chain and possibly in a chloroplast respiratory chain. The immediate electron acceptor for the enzyme in this species is believed to be plastoquinone. Couples the redox reaction to proton translocation, and thus conserves the redox energy in a proton gradient. In Zygnema circumcarinatum (Green alga), this protein is NAD(P)H-quinone oxidoreductase subunit 2, chloroplastic.